The primary structure comprises 640 residues: Isoniazid-induced protein IniA (640 aa).

A helical transmembrane segment spans residues 497-519 (IGMLSSVVGLGLFNPLSVGAGLI). A coiled-coil region spans residues 560–628 (RDRLKMIQRL…QVNDNLAGLE (69 aa)).

As to quaternary structure, forms multimeric structures containing a central pore.

The protein resides in the cell membrane. Functionally, participates in the development of tolerance to both isoniazid and ethambutol. May function through a MDR-pump like mechanism, although it does not appear to directly transport isoniazid from the cell. The chain is Isoniazid-induced protein IniA (iniA) from Mycobacterium tuberculosis (strain CDC 1551 / Oshkosh).